Consider the following 204-residue polypeptide: LexA repressor (204 aa).

Residues 30–50 constitute a DNA-binding region (H-T-H motif); the sequence is IREICQGVGLSSPSTVHHHLK. Residues Ser125 and Lys162 each act as for autocatalytic cleavage activity in the active site.

It belongs to the peptidase S24 family. In terms of assembly, homodimer.

The enzyme catalyses Hydrolysis of Ala-|-Gly bond in repressor LexA.. Its function is as follows. Represses a number of genes involved in the response to DNA damage (SOS response), including recA and lexA. In the presence of single-stranded DNA, RecA interacts with LexA causing an autocatalytic cleavage which disrupts the DNA-binding part of LexA, leading to derepression of the SOS regulon and eventually DNA repair. This chain is LexA repressor, found in Carboxydothermus hydrogenoformans (strain ATCC BAA-161 / DSM 6008 / Z-2901).